Here is a 185-residue protein sequence, read N- to C-terminus: Ribosome-recycling factor (185 aa).

It belongs to the RRF family.

The protein resides in the cytoplasm. In terms of biological role, responsible for the release of ribosomes from messenger RNA at the termination of protein biosynthesis. May increase the efficiency of translation by recycling ribosomes from one round of translation to another. This is Ribosome-recycling factor from Alkaliphilus oremlandii (strain OhILAs) (Clostridium oremlandii (strain OhILAs)).